We begin with the raw amino-acid sequence, 432 residues long: D-amino acid dehydrogenase (432 aa).

An FAD-binding site is contributed by 3–17; the sequence is VVILGSGVVGVASAW.

This sequence belongs to the DadA oxidoreductase family. Requires FAD as cofactor.

The catalysed reaction is a D-alpha-amino acid + A + H2O = a 2-oxocarboxylate + AH2 + NH4(+). It participates in amino-acid degradation; D-alanine degradation; NH(3) and pyruvate from D-alanine: step 1/1. In terms of biological role, oxidative deamination of D-amino acids. The protein is D-amino acid dehydrogenase of Klebsiella pneumoniae (strain 342).